We begin with the raw amino-acid sequence, 278 residues long: S-formylglutathione hydrolase YeiG (278 aa).

Residues Ser145, Asp223, and His256 each act as charge relay system in the active site.

It belongs to the esterase D family.

It catalyses the reaction S-formylglutathione + H2O = formate + glutathione + H(+). Functionally, serine hydrolase involved in the detoxification of formaldehyde. Hydrolyzes S-formylglutathione to glutathione and formate. In Escherichia coli (strain SMS-3-5 / SECEC), this protein is S-formylglutathione hydrolase YeiG (yeiG).